A 65-amino-acid polypeptide reads, in one-letter code: DNA-directed RNA polymerase subunit omega (65 aa).

Belongs to the RNA polymerase subunit omega family. In terms of assembly, the RNAP catalytic core consists of 2 alpha, 1 beta, 1 beta' and 1 omega subunit. When a sigma factor is associated with the core the holoenzyme is formed, which can initiate transcription.

It catalyses the reaction RNA(n) + a ribonucleoside 5'-triphosphate = RNA(n+1) + diphosphate. In terms of biological role, promotes RNA polymerase assembly. Latches the N- and C-terminal regions of the beta' subunit thereby facilitating its interaction with the beta and alpha subunits. This is DNA-directed RNA polymerase subunit omega from Finegoldia magna (strain ATCC 29328 / DSM 20472 / WAL 2508) (Peptostreptococcus magnus).